The chain runs to 346 residues: DNA primase small subunit PriS (346 aa).

Residues Asp-95 and Asp-97 contribute to the active site. Positions 106, 108, 114, and 117 each coordinate Zn(2+). The Zinc knuckle motif signature appears at 106 to 117; the sequence is CEHEPGTVCPIC. The active site involves Asp-280.

Belongs to the eukaryotic-type primase small subunit family. As to quaternary structure, heterodimer of a small subunit (PriS) and a large subunit (PriL). Requires Mg(2+) as cofactor. It depends on Mn(2+) as a cofactor.

In terms of biological role, catalytic subunit of DNA primase, an RNA polymerase that catalyzes the synthesis of short RNA molecules used as primers for DNA polymerase during DNA replication. The small subunit contains the primase catalytic core and has DNA synthesis activity on its own. Binding to the large subunit stabilizes and modulates the activity, increasing the rate of DNA synthesis while decreasing the length of the DNA fragments, and conferring RNA synthesis capability. The DNA polymerase activity may enable DNA primase to also catalyze primer extension after primer synthesis. May also play a role in DNA repair. This chain is DNA primase small subunit PriS, found in Pyrococcus horikoshii (strain ATCC 700860 / DSM 12428 / JCM 9974 / NBRC 100139 / OT-3).